The primary structure comprises 152 residues: Ribonuclease pancreatic beta-type (152 aa).

The N-terminal stretch at 1 to 25 (MGLEKSFILFSLLVLVLGWVQPSLG) is a signal peptide. Residues 31–45 (SSADKFKRQHMDPES) show a composition bias toward basic and acidic residues. The disordered stretch occupies residues 31 to 53 (SSADKFKRQHMDPESPSKSSPTY). Residues Lys-35 and Arg-38 each contribute to the substrate site. His-40 functions as the Proton acceptor in the catalytic mechanism. 4 disulfide bridges follow: Cys-54/Cys-112, Cys-68/Cys-123, Cys-86/Cys-138, and Cys-93/Cys-100. Residues 69–73 (KPVNT), Lys-94, and Arg-113 contribute to the substrate site. His-147 (proton donor) is an active-site residue.

The protein belongs to the pancreatic ribonuclease family. As to quaternary structure, monomer.

It is found in the secreted. The enzyme catalyses an [RNA] containing cytidine + H2O = an [RNA]-3'-cytidine-3'-phosphate + a 5'-hydroxy-ribonucleotide-3'-[RNA].. It catalyses the reaction an [RNA] containing uridine + H2O = an [RNA]-3'-uridine-3'-phosphate + a 5'-hydroxy-ribonucleotide-3'-[RNA].. Its function is as follows. Endonuclease that catalyzes the cleavage of RNA on the 3' side of pyrimidine nucleotides. Acts on single-stranded and double-stranded RNA. The protein is Ribonuclease pancreatic beta-type of Rattus exulans (Polynesian rat).